Reading from the N-terminus, the 88-residue chain is Small ribosomal subunit protein uS15 (88 aa).

This sequence belongs to the universal ribosomal protein uS15 family. Part of the 30S ribosomal subunit. Forms a bridge to the 50S subunit in the 70S ribosome, contacting the 23S rRNA.

In terms of biological role, one of the primary rRNA binding proteins, it binds directly to 16S rRNA where it helps nucleate assembly of the platform of the 30S subunit by binding and bridging several RNA helices of the 16S rRNA. Its function is as follows. Forms an intersubunit bridge (bridge B4) with the 23S rRNA of the 50S subunit in the ribosome. The chain is Small ribosomal subunit protein uS15 from Francisella tularensis subsp. tularensis (strain FSC 198).